The sequence spans 127 residues: Small ribosomal subunit protein uS13 (127 aa).

The interval 93 to 127 is disordered; it reads RRSLPVRGQRTHTNARTRKGPRKGTVANKKKATAK.

Belongs to the universal ribosomal protein uS13 family. In terms of assembly, part of the 30S ribosomal subunit. Forms a loose heterodimer with protein S19. Forms two bridges to the 50S subunit in the 70S ribosome.

Its function is as follows. Located at the top of the head of the 30S subunit, it contacts several helices of the 16S rRNA. In the 70S ribosome it contacts the 23S rRNA (bridge B1a) and protein L5 of the 50S subunit (bridge B1b), connecting the 2 subunits; these bridges are implicated in subunit movement. Contacts the tRNAs in the A and P-sites. The chain is Small ribosomal subunit protein uS13 from Koribacter versatilis (strain Ellin345).